A 1381-amino-acid polypeptide reads, in one-letter code: DNA-directed RNA polymerase subunit beta'' (1381 aa).

Cys220, Cys293, Cys300, and Cys303 together coordinate Zn(2+).

This sequence belongs to the RNA polymerase beta' chain family. RpoC2 subfamily. As to quaternary structure, in plastids the minimal PEP RNA polymerase catalytic core is composed of four subunits: alpha, beta, beta', and beta''. When a (nuclear-encoded) sigma factor is associated with the core the holoenzyme is formed, which can initiate transcription. The cofactor is Zn(2+).

Its subcellular location is the plastid. It is found in the chloroplast. The catalysed reaction is RNA(n) + a ribonucleoside 5'-triphosphate = RNA(n+1) + diphosphate. Its function is as follows. DNA-dependent RNA polymerase catalyzes the transcription of DNA into RNA using the four ribonucleoside triphosphates as substrates. The protein is DNA-directed RNA polymerase subunit beta'' of Draba nemorosa (Woodland whitlowgrass).